The sequence spans 205 residues: Fe/S biogenesis protein NfuA (205 aa).

Positions 162 and 165 each coordinate [4Fe-4S] cluster.

The protein belongs to the NfuA family. Homodimer. Requires [4Fe-4S] cluster as cofactor.

In terms of biological role, involved in iron-sulfur cluster biogenesis. Binds a 4Fe-4S cluster, can transfer this cluster to apoproteins, and thereby intervenes in the maturation of Fe/S proteins. Could also act as a scaffold/chaperone for damaged Fe/S proteins. In Blochmanniella floridana, this protein is Fe/S biogenesis protein NfuA.